The chain runs to 492 residues: Homoserine O-acetyltransferase (492 aa).

The region spanning 47 to 352 is the AB hydrolase-1 domain; the sequence is NAILVFHALS…KSIYGHDAFL (306 aa). The Nucleophile role is filled by Ser152. Residue Arg221 coordinates substrate. Active-site residues include Asp315 and His348. Asp349 contributes to the substrate binding site. CBS domains follow at residues 375 to 431 and 440 to 492; these read MTKN…ENSI and MTKN…TITI.

This sequence belongs to the AB hydrolase superfamily. MetX family. Homodimer.

It is found in the cytoplasm. It catalyses the reaction L-homoserine + acetyl-CoA = O-acetyl-L-homoserine + CoA. The protein operates within amino-acid biosynthesis; L-methionine biosynthesis via de novo pathway; O-acetyl-L-homoserine from L-homoserine: step 1/1. Functionally, transfers an acetyl group from acetyl-CoA to L-homoserine, forming acetyl-L-homoserine. The protein is Homoserine O-acetyltransferase of Methanococcus vannielii (strain ATCC 35089 / DSM 1224 / JCM 13029 / OCM 148 / SB).